The sequence spans 494 residues: Alpha-amylase-related protein (494 aa).

An N-terminal signal peptide occupies residues 1 to 20 (MFKFASAVILCLVAASSTQA). Position 21 is a pyrrolidone carboxylic acid (Gln-21). Cys-48 and Cys-104 are oxidised to a cystine. Asn-118, Gln-169, and Asp-178 together coordinate Ca(2+). Residues Cys-157 and Cys-171 are joined by a disulfide bond. Arg-206 contributes to the chloride binding site. Asp-208 serves as the catalytic Nucleophile. Residue His-212 coordinates Ca(2+). The Proton donor role is filled by Glu-245. Positions 308 and 343 each coordinate chloride. 3 disulfides stabilise this stretch: Cys-376–Cys-382, Cys-418–Cys-441, and Cys-448–Cys-460.

The protein belongs to the glycosyl hydrolase 13 family. As to quaternary structure, monomer. Ca(2+) serves as cofactor. Requires chloride as cofactor.

It is found in the secreted. It catalyses the reaction Endohydrolysis of (1-&gt;4)-alpha-D-glucosidic linkages in polysaccharides containing three or more (1-&gt;4)-alpha-linked D-glucose units.. This chain is Alpha-amylase-related protein (Amyrel), found in Drosophila ercepeae (Fruit fly).